A 360-amino-acid chain; its full sequence is Peptide chain release factor 1 (360 aa).

The residue at position 237 (Gln237) is an N5-methylglutamine.

This sequence belongs to the prokaryotic/mitochondrial release factor family. In terms of processing, methylated by PrmC. Methylation increases the termination efficiency of RF1.

It is found in the cytoplasm. Peptide chain release factor 1 directs the termination of translation in response to the peptide chain termination codons UAG and UAA. This Pseudomonas putida (strain GB-1) protein is Peptide chain release factor 1.